We begin with the raw amino-acid sequence, 424 residues long: 3-ketoacyl-CoA thiolase A, peroxisomal (424 aa).

The transit peptide at 1 to 26 directs the protein to the peroxisome; sequence MHRLQVVLGHLAGRPESSSALQAAPC. The tract at residues 1–26 is PTS2-type peroxisomal targeting signal; it reads MHRLQVVLGHLAGRPESSSALQAAPC. The Acyl-thioester intermediate role is filled by Cys123. N6-acetyllysine occurs at positions 173 and 234. Active-site proton acceptor residues include His377 and Cys408.

Belongs to the thiolase-like superfamily. Thiolase family. Homodimer. Interacts (via PTS2-type peroxisomal targeting signal region) with PEX7; leading to its translocation into peroxisomes. Mainly expressed in liver and intestine.

It is found in the peroxisome. It catalyses the reaction an acyl-CoA + acetyl-CoA = a 3-oxoacyl-CoA + CoA. The enzyme catalyses 2 acetyl-CoA = acetoacetyl-CoA + CoA. It carries out the reaction tetradecanoyl-CoA + acetyl-CoA = 3-oxohexadecanoyl-CoA + CoA. The catalysed reaction is hexanoyl-CoA + acetyl-CoA = 3-oxooctanoyl-CoA + CoA. It catalyses the reaction 3-oxohexadecanedioyl-CoA + CoA = tetradecanedioyl-CoA + acetyl-CoA. The enzyme catalyses 3-oxo-(6Z,9Z,12Z,15Z,18Z,21Z)-tetracosahexaenoyl-CoA + CoA = (4Z,7Z,10Z,13Z,16Z,19Z)-docosahexaenoyl-CoA + acetyl-CoA. It participates in lipid metabolism; peroxisomal fatty acid beta-oxidation. Responsible for the thiolytic cleavage of straight chain 3-keto fatty acyl-CoAs (3-oxoacyl-CoAs). Plays an important role in fatty acid peroxisomal beta-oxidation. Catalyzes the cleavage of short, medium, long, and very long straight chain 3-oxoacyl-CoAs. This is 3-ketoacyl-CoA thiolase A, peroxisomal from Mus musculus (Mouse).